Consider the following 234-residue polypeptide: MAKLTKRMRVIREKVDATKQYDINEAIALLKELATAKFVESVDVAVNLGIDARKSDQNVRGATVLPHGTGRSVRVAVFTQGANAEAAKAAGAELVGMEDLADQIKKGEMNFDVVIASPDAMRVVGQLGQVLGPRGLMPNPKVGTVTPNVAEAVKNAKAGQIRYRNDKNGIIHTTIGKVDFDADKLKENLEALLVALKKAKPTQAKGVYIKKVSISTTMGAGVAVDQAGLSASVN.

This sequence belongs to the universal ribosomal protein uL1 family. Part of the 50S ribosomal subunit.

In terms of biological role, binds directly to 23S rRNA. The L1 stalk is quite mobile in the ribosome, and is involved in E site tRNA release. Its function is as follows. Protein L1 is also a translational repressor protein, it controls the translation of the L11 operon by binding to its mRNA. The sequence is that of Large ribosomal subunit protein uL1 from Escherichia coli O127:H6 (strain E2348/69 / EPEC).